Here is a 138-residue protein sequence, read N- to C-terminus: Cysteine desulfuration protein SufE (138 aa).

Cys-51 (cysteine persulfide intermediate) is an active-site residue.

This sequence belongs to the SufE family. In terms of assembly, homodimer. Interacts with SufS.

The protein localises to the cytoplasm. Its pathway is cofactor biosynthesis; iron-sulfur cluster biosynthesis. In terms of biological role, participates in cysteine desulfuration mediated by SufS. Cysteine desulfuration mobilizes sulfur from L-cysteine to yield L-alanine and constitutes an essential step in sulfur metabolism for biosynthesis of a variety of sulfur-containing biomolecules. Functions as a sulfur acceptor for SufS, by mediating the direct transfer of the sulfur atom from the S-sulfanylcysteine of SufS, an intermediate product of cysteine desulfuration process. The polypeptide is Cysteine desulfuration protein SufE (Pectobacterium atrosepticum (strain SCRI 1043 / ATCC BAA-672) (Erwinia carotovora subsp. atroseptica)).